The sequence spans 201 residues: Small ribosomal subunit protein uS4c (201 aa).

The disordered stretch occupies residues 15–43; that stretch reads LGALPGLTRKRPRSGSDLRNQSRSGKRSQ. The S4 RNA-binding domain occupies 89–150; the sequence is MRLDNILFRL…EQRSRALIQN (62 aa).

This sequence belongs to the universal ribosomal protein uS4 family. In terms of assembly, part of the 30S ribosomal subunit. Contacts protein S5. The interaction surface between S4 and S5 is involved in control of translational fidelity.

The protein localises to the plastid. It localises to the chloroplast. In terms of biological role, one of the primary rRNA binding proteins, it binds directly to 16S rRNA where it nucleates assembly of the body of the 30S subunit. With S5 and S12 plays an important role in translational accuracy. The sequence is that of Small ribosomal subunit protein uS4c (rps4) from Drimys granadensis.